Consider the following 457-residue polypeptide: Cysteine--tRNA ligase (457 aa).

Cys-31 is a Zn(2+) binding site. Positions 33 to 43 match the 'HIGH' region motif; the sequence is PTVYNYAHIGN. Residues Cys-211, His-236, and Glu-240 each coordinate Zn(2+). The 'KMSKS' region motif lies at 269-273; the sequence is KMSKS. Lys-272 is a binding site for ATP.

The protein belongs to the class-I aminoacyl-tRNA synthetase family. In terms of assembly, monomer. It depends on Zn(2+) as a cofactor.

It is found in the cytoplasm. The enzyme catalyses tRNA(Cys) + L-cysteine + ATP = L-cysteinyl-tRNA(Cys) + AMP + diphosphate. The sequence is that of Cysteine--tRNA ligase from Xanthomonas campestris pv. campestris (strain ATCC 33913 / DSM 3586 / NCPPB 528 / LMG 568 / P 25).